The chain runs to 141 residues: Cystatin (141 aa).

Residues 1–26 form the signal peptide; that stretch reads MVHSQLPVVALLRLLCALLLLPSATM. The region spanning 29–129 is the Cystatin domain; the sequence is GGLSPRSVTD…CRFQVWSRPW (101 aa). Residues 73-77 carry the Secondary area of contact motif; that stretch reads QVVAG. 2 cysteine pairs are disulfide-bonded: C91–C107 and C120–C140.

This sequence belongs to the cystatin family. As to expression, expressed at a low level by the venom gland (at protein level).

It is found in the secreted. Inhibits various C1 cysteine proteases including cathepsin L, papain and cathepsin B. This protein has no toxic activity and its function in the venom is unknown. It may play a role as a housekeeping or regulatory protein. The chain is Cystatin from Notechis scutatus scutatus (Mainland tiger snake).